The primary structure comprises 141 residues: Nucleoside diphosphate kinase (141 aa).

ATP is bound by residues Lys-11, Phe-59, Arg-87, Thr-93, Arg-104, and Asn-114. His-117 serves as the catalytic Pros-phosphohistidine intermediate.

Belongs to the NDK family. Homotetramer. It depends on Mg(2+) as a cofactor.

It is found in the cytoplasm. It carries out the reaction a 2'-deoxyribonucleoside 5'-diphosphate + ATP = a 2'-deoxyribonucleoside 5'-triphosphate + ADP. The catalysed reaction is a ribonucleoside 5'-diphosphate + ATP = a ribonucleoside 5'-triphosphate + ADP. Its function is as follows. Major role in the synthesis of nucleoside triphosphates other than ATP. The ATP gamma phosphate is transferred to the NDP beta phosphate via a ping-pong mechanism, using a phosphorylated active-site intermediate. The chain is Nucleoside diphosphate kinase from Herminiimonas arsenicoxydans.